The sequence spans 255 residues: Hydroxyacylglutathione hydrolase (255 aa).

The Zn(2+) site is built by His-56, His-58, Asp-60, His-61, His-114, Asp-133, and His-171.

Belongs to the metallo-beta-lactamase superfamily. Glyoxalase II family. In terms of assembly, monomer. Requires Zn(2+) as cofactor.

It carries out the reaction an S-(2-hydroxyacyl)glutathione + H2O = a 2-hydroxy carboxylate + glutathione + H(+). It participates in secondary metabolite metabolism; methylglyoxal degradation; (R)-lactate from methylglyoxal: step 2/2. In terms of biological role, thiolesterase that catalyzes the hydrolysis of S-D-lactoyl-glutathione to form glutathione and D-lactic acid. This chain is Hydroxyacylglutathione hydrolase, found in Mesorhizobium japonicum (strain LMG 29417 / CECT 9101 / MAFF 303099) (Mesorhizobium loti (strain MAFF 303099)).